The sequence spans 456 residues: NADPH-ferredoxin reductase FprA (456 aa).

The FAD site is built by serine 17, glutamate 43, leucine 51, and valine 87. NADP(+)-binding positions include arginine 113, asparagine 158–valine 161, arginine 202–arginine 203, and glutamate 214. FAD contacts are provided by residues tryptophan 362 and glycine 369–isoleucine 371. Position 369 (glycine 369) interacts with NADP(+).

This sequence belongs to the ferredoxin--NADP reductase type 1 family. As to quaternary structure, monomer. FAD is required as a cofactor.

It catalyses the reaction 2 reduced [2Fe-2S]-[ferredoxin] + NADP(+) + H(+) = 2 oxidized [2Fe-2S]-[ferredoxin] + NADPH. In terms of biological role, may serve as electron transfer protein and supply electrons to P450 systems. The polypeptide is NADPH-ferredoxin reductase FprA (fprA) (Mycobacterium leprae (strain TN)).